The chain runs to 149 residues: Large ribosomal subunit protein uL13 (149 aa).

It belongs to the universal ribosomal protein uL13 family. In terms of assembly, part of the 50S ribosomal subunit.

Functionally, this protein is one of the early assembly proteins of the 50S ribosomal subunit, although it is not seen to bind rRNA by itself. It is important during the early stages of 50S assembly. This chain is Large ribosomal subunit protein uL13, found in Thermosipho africanus (strain TCF52B).